The primary structure comprises 647 residues: Centrosomal protein of 72 kDa (647 aa).

LRR repeat units lie at residues 29-50 (ELQS…GHSL), 55-76 (GLKS…QYLT), and 77-98 (ALES…FRLH). Residues 111 to 150 (NPVVKVEPDYRLFVVHLLPKLQQLDDRPVRASERKASRLH) form the LRRCT domain. Basic and acidic residues-rich tracts occupy residues 152-161 (ASEDSLDSKE) and 220-234 (KGRE…ESRH). 3 disordered regions span residues 152–176 (ASED…HHPR), 211–256 (PPGS…RETR), and 285–413 (PEAS…ALPG). S237 is modified (phosphoserine). Over residues 366–377 (SLSRQDSSESRN) the composition is skewed to basic and acidic residues. At S382 the chain carries Phosphoserine. Basic and acidic residues predominate over residues 390–402 (EEQRSRGVTDTRE). Position 404 is a phosphoserine (S404). The stretch at 476-620 (SLALESKSLQ…AQHRAEVEQM (145 aa)) forms a coiled coil.

The protein belongs to the CEP72 family. Interacts with KIZ, PCM1 and CDK5RAP2.

It is found in the cytoplasm. The protein resides in the cytoskeleton. The protein localises to the microtubule organizing center. It localises to the centrosome. Its subcellular location is the centriolar satellite. In terms of biological role, involved in the recruitment of key centrosomal proteins to the centrosome. Provides centrosomal microtubule-nucleation activity on the gamma-tubulin ring complexes (gamma-TuRCs) and has critical roles in forming a focused bipolar spindle, which is needed for proper tension generation between sister chromatids. Required for localization of KIZ, AKAP9 and gamma-tubulin ring complexes (gamma-TuRCs). Involved in centriole duplication. Required for CDK5RAP22, CEP152, WDR62 and CEP63 centrosomal localization and promotes the centrosomal localization of CDK2. The polypeptide is Centrosomal protein of 72 kDa (CEP72) (Homo sapiens (Human)).